The following is a 492-amino-acid chain: ATP synthase subunit beta, chloroplastic (492 aa).

170–177 lines the ATP pocket; the sequence is GGAGVGKT.

It belongs to the ATPase alpha/beta chains family. As to quaternary structure, F-type ATPases have 2 components, CF(1) - the catalytic core - and CF(0) - the membrane proton channel. CF(1) has five subunits: alpha(3), beta(3), gamma(1), delta(1), epsilon(1). CF(0) has four main subunits: a(1), b(1), b'(1) and c(9-12).

The protein localises to the plastid. It localises to the chloroplast thylakoid membrane. The catalysed reaction is ATP + H2O + 4 H(+)(in) = ADP + phosphate + 5 H(+)(out). Its function is as follows. Produces ATP from ADP in the presence of a proton gradient across the membrane. The catalytic sites are hosted primarily by the beta subunits. This Anthoceros angustus (Hornwort) protein is ATP synthase subunit beta, chloroplastic.